Here is a 94-residue protein sequence, read N- to C-terminus: Acylphosphatase (94 aa).

The Acylphosphatase-like domain maps to 8-94 (HIRAWVSGKV…ETPPLGFEVC (87 aa)). Residues arginine 23 and asparagine 41 contribute to the active site.

This sequence belongs to the acylphosphatase family.

The enzyme catalyses an acyl phosphate + H2O = a carboxylate + phosphate + H(+). The protein is Acylphosphatase (acyP) of Hahella chejuensis (strain KCTC 2396).